A 305-amino-acid polypeptide reads, in one-letter code: Testis-expressed protein 52 (305 aa).

Residues 284–305 (HLSKAQASKSPARKRKRRPGHF) form a disordered region. Residues 294–305 (PARKRKRRPGHF) show a composition bias toward basic residues.

Expressed in Testis.

The sequence is that of Testis-expressed protein 52 from Homo sapiens (Human).